Reading from the N-terminus, the 207-residue chain is Alpha-1-acid glycoprotein 1 (207 aa).

Residues 1–18 form the signal peptide; it reads MALHMILVMLSLLPLLEA. Position 19 is a pyrrolidone carboxylic acid (glutamine 19). 5 N-linked (GlcNAc...) asparagine glycosylation sites follow: asparagine 25, asparagine 34, asparagine 76, asparagine 94, and asparagine 104. A disulfide bond links cysteine 91 and cysteine 184.

Belongs to the calycin superfamily. Lipocalin family. As to expression, expressed by the liver and secreted in plasma.

It is found in the secreted. Its function is as follows. Functions as a transport protein in the blood stream. Binds various ligands in the interior of its beta-barrel domain. Appears to function in modulating the activity of the immune system during the acute-phase reaction. This is Alpha-1-acid glycoprotein 1 (Orm1) from Mus caroli (Ryukyu mouse).